We begin with the raw amino-acid sequence, 272 residues long: Shikimate dehydrogenase (NADP(+)) (272 aa).

Residues 14-16 (SLS) and Thr-61 each bind shikimate. The active-site Proton acceptor is the Lys-65. Position 102 (Asp-102) interacts with shikimate. Residues 127 to 131 (GAGGA), 151 to 156 (NRTPSK), and Leu-215 each bind NADP(+). Tyr-217 lines the shikimate pocket. Gly-239 provides a ligand contact to NADP(+).

Belongs to the shikimate dehydrogenase family. As to quaternary structure, homodimer.

The enzyme catalyses shikimate + NADP(+) = 3-dehydroshikimate + NADPH + H(+). It participates in metabolic intermediate biosynthesis; chorismate biosynthesis; chorismate from D-erythrose 4-phosphate and phosphoenolpyruvate: step 4/7. Functionally, involved in the biosynthesis of the chorismate, which leads to the biosynthesis of aromatic amino acids. Catalyzes the reversible NADPH linked reduction of 3-dehydroshikimate (DHSA) to yield shikimate (SA). The protein is Shikimate dehydrogenase (NADP(+)) of Coxiella burnetii (strain CbuK_Q154) (Coxiella burnetii (strain Q154)).